A 383-amino-acid chain; its full sequence is 23S rRNA (uracil(747)-C(5))-methyltransferase RlmC (383 aa).

[4Fe-4S] cluster is bound by residues cysteine 3, cysteine 11, cysteine 14, and cysteine 89. S-adenosyl-L-methionine contacts are provided by glutamine 214, phenylalanine 243, glutamate 270, and asparagine 315. The active-site Nucleophile is cysteine 342.

Belongs to the class I-like SAM-binding methyltransferase superfamily. RNA M5U methyltransferase family. RlmC subfamily.

The catalysed reaction is uridine(747) in 23S rRNA + S-adenosyl-L-methionine = 5-methyluridine(747) in 23S rRNA + S-adenosyl-L-homocysteine + H(+). Catalyzes the formation of 5-methyl-uridine at position 747 (m5U747) in 23S rRNA. In Actinobacillus succinogenes (strain ATCC 55618 / DSM 22257 / CCUG 43843 / 130Z), this protein is 23S rRNA (uracil(747)-C(5))-methyltransferase RlmC.